A 231-amino-acid polypeptide reads, in one-letter code: NADH-ubiquinone oxidoreductase chain 4 (231 aa).

6 helical membrane passes run 1 to 21 (PIAG…YGII), 34 to 54 (LFLP…LTCL), 61 to 80 (SLIA…AIII), 84 to 106 (WGLS…LFCL), 128 to 148 (ILPM…ATPP), and 169 to 189 (TIIL…HMFL).

Belongs to the complex I subunit 4 family.

The protein resides in the mitochondrion membrane. The catalysed reaction is a ubiquinone + NADH + 5 H(+)(in) = a ubiquinol + NAD(+) + 4 H(+)(out). In terms of biological role, core subunit of the mitochondrial membrane respiratory chain NADH dehydrogenase (Complex I) that is believed to belong to the minimal assembly required for catalysis. Complex I functions in the transfer of electrons from NADH to the respiratory chain. The immediate electron acceptor for the enzyme is believed to be ubiquinone. In Metlapilcoatlus nummifer (Mexican jumping pitviper), this protein is NADH-ubiquinone oxidoreductase chain 4 (MT-ND4).